The following is a 105-amino-acid chain: Large ribosomal subunit protein uL24 (105 aa).

This sequence belongs to the universal ribosomal protein uL24 family. Part of the 50S ribosomal subunit.

In terms of biological role, one of two assembly initiator proteins, it binds directly to the 5'-end of the 23S rRNA, where it nucleates assembly of the 50S subunit. Its function is as follows. One of the proteins that surrounds the polypeptide exit tunnel on the outside of the subunit. The sequence is that of Large ribosomal subunit protein uL24 from Buchnera aphidicola subsp. Cinara cedri (strain Cc).